A 54-amino-acid polypeptide reads, in one-letter code: 2-aminomuconate deaminase (54 aa).

In terms of assembly, homohexamer.

The catalysed reaction is (2Z,4E)-2-aminomuconate + H2O = (3E)-2-oxohex-3-enedioate + NH4(+). It functions in the pathway xenobiotic degradation; nitrobenzene degradation. Functionally, converts 2-aminomuconate to 4-oxalocrotonate, an intermediate step in the biodegradation of nitrobenzene. This Ectopseudomonas oleovorans (Pseudomonas oleovorans) protein is 2-aminomuconate deaminase.